Reading from the N-terminus, the 377-residue chain is MADYYDLLGVGRDADADTLKRAYRSKARKYHPDINKEPGAEDRFKEIGRAYEVLSDPQTRARYDQFGEAGLGGAAGASDMGDMGGFADLFETFFQGFGGPGGAAAGRSGRRGPQQGDDLRYDLTIDFEQAVFGQEQEIKIPHLETCDTCGGSGAKAGSGPTTCGTCGGAGQVRRATRTPFGSFTQVAECPNCGGTGQVIADPCNACGGQGVRQVRKKLRINIPAGVDTGTRLRVSGEGNAGQRGGPSGDLYVFLTVKSHPRLRRDGLNILSTVNVSYLQAILGDTIEVETVDGDTVLEIPPGTQPGTVLTLANKGIPKLGNPVARGDQRVQVMVQLPTRLSDPERTLLEELAGHHSARGKQHHHHNSGLFARLFGQK.

The J domain occupies 3–67 (DYYDLLGVGR…QTRARYDQFG (65 aa)). Residues 133–215 (GQEQEIKIPH…CGGQGVRQVR (83 aa)) form a CR-type zinc finger. Zn(2+) is bound by residues Cys146, Cys149, Cys163, Cys166, Cys189, Cys192, Cys203, and Cys206. 4 CXXCXGXG motif repeats span residues 146 to 153 (CDTCGGSG), 163 to 170 (CGTCGGAG), 189 to 196 (CPNCGGTG), and 203 to 210 (CNACGGQG).

It belongs to the DnaJ family. In terms of assembly, homodimer. It depends on Zn(2+) as a cofactor.

It localises to the cytoplasm. Participates actively in the response to hyperosmotic and heat shock by preventing the aggregation of stress-denatured proteins and by disaggregating proteins, also in an autonomous, DnaK-independent fashion. Unfolded proteins bind initially to DnaJ; upon interaction with the DnaJ-bound protein, DnaK hydrolyzes its bound ATP, resulting in the formation of a stable complex. GrpE releases ADP from DnaK; ATP binding to DnaK triggers the release of the substrate protein, thus completing the reaction cycle. Several rounds of ATP-dependent interactions between DnaJ, DnaK and GrpE are required for fully efficient folding. Also involved, together with DnaK and GrpE, in the DNA replication of plasmids through activation of initiation proteins. The protein is Chaperone protein DnaJ of Parasynechococcus marenigrum (strain WH8102).